The sequence spans 155 residues: Ribosomal RNA large subunit methyltransferase H (155 aa).

S-adenosyl-L-methionine is bound by residues leucine 73, glycine 104, and 123–128; that span reads LSPLTL.

Belongs to the RNA methyltransferase RlmH family. In terms of assembly, homodimer.

The protein localises to the cytoplasm. It carries out the reaction pseudouridine(1915) in 23S rRNA + S-adenosyl-L-methionine = N(3)-methylpseudouridine(1915) in 23S rRNA + S-adenosyl-L-homocysteine + H(+). Its function is as follows. Specifically methylates the pseudouridine at position 1915 (m3Psi1915) in 23S rRNA. The sequence is that of Ribosomal RNA large subunit methyltransferase H from Pseudomonas putida (strain W619).